The following is a 219-amino-acid chain: Probable nicotinate-nucleotide adenylyltransferase (219 aa).

It belongs to the NadD family.

It carries out the reaction nicotinate beta-D-ribonucleotide + ATP + H(+) = deamido-NAD(+) + diphosphate. The protein operates within cofactor biosynthesis; NAD(+) biosynthesis; deamido-NAD(+) from nicotinate D-ribonucleotide: step 1/1. Functionally, catalyzes the reversible adenylation of nicotinate mononucleotide (NaMN) to nicotinic acid adenine dinucleotide (NaAD). The sequence is that of Probable nicotinate-nucleotide adenylyltransferase from Pseudomonas putida (strain GB-1).